The primary structure comprises 453 residues: Phenylalanine-4-hydroxylase (453 aa).

Residue Ala2 is modified to N-acetylalanine. Ser16 carries the post-translational modification Phosphoserine. In terms of domain architecture, ACT spans 36–114 (SLIFSLKEEV…TVHELSRDKE (79 aa)). Fe cation contacts are provided by His285, His290, and Glu330.

It belongs to the biopterin-dependent aromatic amino acid hydroxylase family. In terms of assembly, homodimer and homotetramer. The cofactor is Fe(2+). Post-translationally, phosphorylation at Ser-16 increases basal activity and facilitates activation by the substrate phenylalanine.

The catalysed reaction is (6R)-L-erythro-5,6,7,8-tetrahydrobiopterin + L-phenylalanine + O2 = (4aS,6R)-4a-hydroxy-L-erythro-5,6,7,8-tetrahydrobiopterin + L-tyrosine. Its pathway is amino-acid degradation; L-phenylalanine degradation; acetoacetate and fumarate from L-phenylalanine: step 1/6. N-terminal region of PAH is thought to contain allosteric binding sites for phenylalanine and to constitute an 'inhibitory' domain that regulates the activity of a catalytic domain in the C-terminal portion of the molecule. Functionally, catalyzes the hydroxylation of L-phenylalanine to L-tyrosine. The sequence is that of Phenylalanine-4-hydroxylase (Pah) from Mus musculus (Mouse).